The primary structure comprises 499 residues: Phenylalanine--tRNA ligase alpha subunit (499 aa).

L-phenylalanine contacts are provided by residues T342, 381–383, and F422; that span reads QID. E424 lines the Mg(2+) pocket. F447 provides a ligand contact to L-phenylalanine.

Belongs to the class-II aminoacyl-tRNA synthetase family. Phe-tRNA synthetase alpha subunit type 2 subfamily. As to quaternary structure, tetramer of two alpha and two beta subunits. Requires Mg(2+) as cofactor.

Its subcellular location is the cytoplasm. The catalysed reaction is tRNA(Phe) + L-phenylalanine + ATP = L-phenylalanyl-tRNA(Phe) + AMP + diphosphate + H(+). The polypeptide is Phenylalanine--tRNA ligase alpha subunit (Pyrococcus furiosus (strain ATCC 43587 / DSM 3638 / JCM 8422 / Vc1)).